Here is a 758-residue protein sequence, read N- to C-terminus: POU domain, class 2, transcription factor 1 (758 aa).

Polar residues-rich tracts occupy residues 1–10 (MKLHSSSKIQ), 19–30 (RMNNPSETSKSP), and 275–285 (VQQLPQSQTTP). Disordered stretches follow at residues 1 to 43 (MKLH…QTNG), 271 to 296 (AATP…LEEP), 377 to 398 (TNQS…RRKK), 450 to 472 (EKRI…LFSS), and 534 to 573 (SVLT…MTSS). Positions 294-368 (EEPSDLEELE…LLEKWLNDAE (75 aa)) constitute a POU-specific domain. The segment at residues 395 to 454 (RRKKRTSIETNIRVALEKSFLENQKPTSEEITMIADQLNMEKEVIRVWFCNRRQKEKRIN) is a DNA-binding region (homeobox). The span at 455–472 (PPSSGGSSSSPIKSLFSS) shows a compositional bias: low complexity.

Belongs to the POU transcription factor family. Class-2 subfamily. As to expression, expressed in oocytes (at protein level). Expressed in the tadpole brain (at protein level).

Its subcellular location is the cytoplasm. It localises to the nucleus. In terms of biological role, transcription factor that binds to the octamer motif (5'-ATTTGCAT-3') and activates the promoters of the genes of some small nuclear RNAs (snRNA) and histone H2B. In vitro does not bind to variant octamer sequences, such as the H2B octamer 5'-GTTTGCAT-3', although binding has been observed in vivo during early embryogenesis, suggesting that interactions between pou2f1 and other factors might be required for octamer-dependent H2B transcription. Acts downstream of Notch signaling during radial glia formation. May be important for gastrulation, possibly through the regulation of an FGF-type signaling pathway. This Xenopus laevis (African clawed frog) protein is POU domain, class 2, transcription factor 1 (pou2f1).